The chain runs to 291 residues: Nitrogenase iron protein (291 aa).

An ATP-binding site is contributed by 11–18; sequence GKGGIGKS. Cys99 serves as a coordination point for [4Fe-4S] cluster. At Arg102 the chain carries ADP-ribosylarginine; by dinitrogenase reductase ADP-ribosyltransferase. [4Fe-4S] cluster is bound at residue Cys133.

Belongs to the NifH/BchL/ChlL family. Homodimer. [4Fe-4S] cluster is required as a cofactor. The reversible ADP-ribosylation of Arg-102 inactivates the nitrogenase reductase and regulates nitrogenase activity.

The catalysed reaction is N2 + 8 reduced [2Fe-2S]-[ferredoxin] + 16 ATP + 16 H2O = H2 + 8 oxidized [2Fe-2S]-[ferredoxin] + 2 NH4(+) + 16 ADP + 16 phosphate + 6 H(+). The key enzymatic reactions in nitrogen fixation are catalyzed by the nitrogenase complex, which has 2 components: the iron protein and the molybdenum-iron protein. The polypeptide is Nitrogenase iron protein (Cereibacter sphaeroides (strain ATCC 17023 / DSM 158 / JCM 6121 / CCUG 31486 / LMG 2827 / NBRC 12203 / NCIMB 8253 / ATH 2.4.1.) (Rhodobacter sphaeroides)).